Reading from the N-terminus, the 221-residue chain is MSVIAKQMTYKVYMSGTVNGHYFEVQGDGKGKPYEGEQTVKLTVTKGGPLPFAWDILSPQSQYGSIPFTKYPEDIPDYVKQSFPEGYTWERIMNFEDGAVCTVSNDSSIQGNCFIYNVKFSGLNFPPNGPVMQKKTQGWEPNTERLFARDGMLIGNNFMALKLEGGGHYLCEFKSTYKAKKPVKMPGYHYVDRKLDVTNHNIDYTSVEQCEISIARKPVVA.

The 2-iminomethyl-5-imidazolinone (Gln-Gly) cross-link spans glutamine 62–glycine 64. Tyrosine 63 carries the post-translational modification 2,3-didehydrotyrosine.

This sequence belongs to the GFP family. In terms of assembly, homotetramer. In terms of processing, contains a chromophore consisting of modified amino acid residues. The chromophore is formed by autocatalytic backbone condensation between Xaa-N and Gly-(N+2), oxidation of Tyr-(N+1) to didehydrotyrosine, and formation of a double bond to the alpha-amino nitrogen of residue Xaa-N. Maturation of the chromophore requires nothing other than molecular oxygen. The precise stereochemistry of the tyrosine has not been determined.

Functionally, non-fluorescent pigment protein that is lilac in color. The protein is GFP-like non-fluorescent chromoprotein of Goniopora tenuidens (Anemone coral).